The chain runs to 350 residues: Neutral protease 2 homolog SNOG_10522 (350 aa).

The signal sequence occupies residues 1–18; sequence MKVSSQLAVAALASFATA. The propeptide occupies 19–180; it reads ASVDVHKRET…AKALNKRTAI (162 aa). Intrachain disulfides connect Cys-184/Cys-251 and Cys-258/Cys-276. A Zn(2+)-binding site is contributed by His-301. The active site involves Glu-302. The Zn(2+) site is built by His-305 and Asp-316.

It belongs to the peptidase M35 family. Zn(2+) is required as a cofactor.

The protein localises to the secreted. The catalysed reaction is Preferential cleavage of bonds with hydrophobic residues in P1'. Also 3-Asn-|-Gln-4 and 8-Gly-|-Ser-9 bonds in insulin B chain.. Functionally, secreted metalloproteinase that allows assimilation of proteinaceous substrates. Shows high activities on basic nuclear substrates such as histone and protamine. The polypeptide is Neutral protease 2 homolog SNOG_10522 (Phaeosphaeria nodorum (strain SN15 / ATCC MYA-4574 / FGSC 10173) (Glume blotch fungus)).